The chain runs to 274 residues: NAD(P)H dehydrogenase [quinone] 1 (274 aa).

FAD is bound by residues His12, 18-19, and Gln67; that span reads FN. A Phosphoserine modification is found at Ser82. Residue 104-107 coordinates FAD; sequence LQWF. A substrate-binding site is contributed by 126–128; sequence AYT. FAD contacts are provided by residues 148 to 151, Tyr156, and Arg201; that span reads TTGG. The interval 225-274 is important for apoenzyme conformational stability; it reads PSSLFDLNFQAGFLMKKEVQDEEKNKKFGLSVGHHLGKSIPTDNQIKARK. Residues Lys250 and Lys251 each participate in a glycyl lysine isopeptide (Lys-Gly) (interchain with G-Cter in SUMO2) cross-link.

This sequence belongs to the NAD(P)H dehydrogenase (quinone) family. As to quaternary structure, homodimer. Interacts with PDLIM4 isoform 2; this interaction stabilizes PDLIM4 isoform 2 in response to oxidative stress and protects it from ubiquitin-independent degradation by the core 20S proteasome. Interacts with TP73 (via SAM domain); this interaction is NADH-dependent, stabilizes TP73 in response to oxidative stress and protects it from ubiquitin-independent degradation by the 20S proteasome. Interacts with TP53; this interaction is NADH-dependent, stabilizes TP53 in response to oxidative stress and protects it from ubiquitin-independent degradation by the 20S proteasome. The cofactor is FAD.

The protein localises to the cytoplasm. It is found in the cytosol. The enzyme catalyses a quinone + NADH + H(+) = a quinol + NAD(+). The catalysed reaction is a quinone + NADPH + H(+) = a quinol + NADP(+). It catalyses the reaction ubiquinone-10 + NADH + H(+) = ubiquinol-10 + NAD(+). It carries out the reaction menadione + NADH + H(+) = menadiol + NAD(+). Its function is as follows. Flavin-containing quinone reductase that catalyzes two-electron reduction of quinones to hydroquinones using either NADH or NADPH as electron donors. In a ping-pong kinetic mechanism, the electrons are sequentially transferred from NAD(P)H to flavin cofactor and then from reduced flavin to the quinone, bypassing the formation of semiquinone and reactive oxygen species. Regulates cellular redox state primarily through quinone detoxification. Reduces components of plasma membrane redox system such as coenzyme Q and vitamin quinones, producing antioxidant hydroquinone forms. In the process may function as superoxide scavenger to prevent hydroquinone oxidation and facilitate excretion. Alternatively, can activate quinones and their derivatives by generating redox reactive hydroquinones with DNA cross-linking antitumor potential. Acts as a gatekeeper of the core 20S proteasome known to degrade proteins with unstructured regions. Upon oxidative stress, interacts with tumor suppressors TP53 and TP73 in a NADH-dependent way and inhibits their ubiquitin-independent degradation by the 20S proteasome. The protein is NAD(P)H dehydrogenase [quinone] 1 (NQO1) of Pongo abelii (Sumatran orangutan).